The chain runs to 299 residues: ATP phosphoribosyltransferase (299 aa).

It belongs to the ATP phosphoribosyltransferase family. Long subfamily. Equilibrium between an active dimeric form, an inactive hexameric form and higher aggregates. Interconversion between the various forms is largely reversible and is influenced by the natural substrates and inhibitors of the enzyme. Mg(2+) is required as a cofactor.

It localises to the cytoplasm. The enzyme catalyses 1-(5-phospho-beta-D-ribosyl)-ATP + diphosphate = 5-phospho-alpha-D-ribose 1-diphosphate + ATP. The protein operates within amino-acid biosynthesis; L-histidine biosynthesis; L-histidine from 5-phospho-alpha-D-ribose 1-diphosphate: step 1/9. Its activity is regulated as follows. Feedback inhibited by histidine. In terms of biological role, catalyzes the condensation of ATP and 5-phosphoribose 1-diphosphate to form N'-(5'-phosphoribosyl)-ATP (PR-ATP). Has a crucial role in the pathway because the rate of histidine biosynthesis seems to be controlled primarily by regulation of HisG enzymatic activity. The chain is ATP phosphoribosyltransferase from Escherichia coli O7:K1 (strain IAI39 / ExPEC).